A 576-amino-acid chain; its full sequence is MEVGRVKRVAGPVVQAVGLKASMYDLVLVGEEGLMSEVIGISGDKHIIQVYEDTSGIKPGEPVKETGGPLVAQLGPGILTQIYDGVQRPLPLLAEKSGDFISRGLFVDGVDHKKKWEFKPLVKKGDTVKPGQPIGEVQEQLLIKHKIMVPPKHKGGVVKEIYSGNFTVEETVCVLEDGSELTMLQKWPVRQARPVVRKLPPTIPLRTGQRVIDGFFPLAKGGTAAIPGGFGTGKTVMQQTLSKWSDVDIVIYVGCGERGNEMADLLHEFPELVDPRTNRPLLERSIVYANTSNMPVAAREASIYTGMTTAEYYRDMGYDVLMTADSTSRWAEAMRELASRLEEMPGEEGYPAYLAARLADFYERAGRAEVLAGGEGSVAVVGAVSPPGGDFTEPVTQNTLRIVKVFWALDSRLTQRRHFPSINWLDSYSLYEKDLESWYAENVAPDWNQLKRRAMAILQENAELEEIVMLVGSDALPEDQQLTLEVARMIINFWLAQSAFHPVDTFCPYKKQYDLLKAILTYRDYAFDALRRGVAVDQIKSVPSKDALAKLRMVEDYEPDLKKVMDQMKAEFEALK.

Residue 228 to 235 participates in ATP binding; sequence GGFGTGKT.

The protein belongs to the ATPase alpha/beta chains family. As to quaternary structure, has multiple subunits with at least A(3), B(3), C, D, E, F, H, I and proteolipid K(x).

It localises to the cell membrane. The catalysed reaction is ATP + H2O + 4 H(+)(in) = ADP + phosphate + 5 H(+)(out). In terms of biological role, component of the A-type ATP synthase that produces ATP from ADP in the presence of a proton gradient across the membrane. The A chain is the catalytic subunit. This chain is A-type ATP synthase subunit A, found in Methanothrix thermoacetophila (strain DSM 6194 / JCM 14653 / NBRC 101360 / PT) (Methanosaeta thermophila).